The sequence spans 143 residues: Turripeptide VIII-01 (143 aa).

The signal sequence occupies residues 1–23; sequence MALSLDILMSVTMVTAVLTTVNA. A propeptide spanning residues 24 to 32 is cleaved from the precursor; that stretch reads EYKDSRLDS.

Contains 4 disulfide bonds. As to expression, expressed by the venom duct.

The protein localises to the secreted. The chain is Turripeptide VIII-01 from Gemmula speciosa (Splendid gem-turris).